A 365-amino-acid chain; its full sequence is Centrosomal protein of 41 kDa B (365 aa).

A compositionally biased stretch (basic and acidic residues) spans 1-14 (MSAKRSIGDPEILK). Disordered stretches follow at residues 1-23 (MSAK…NQKY) and 104-123 (EFLT…SKSP). In terms of domain architecture, Rhodanese spans 177–274 (EDCPFLLLDV…ISQKFPQGLT (98 aa)). The segment at 329–365 (TSTPSRLRLDSRNSKVPSSASSARSLSSTSSHSKPWK) is disordered. A compositionally biased stretch (low complexity) spans 342 to 365 (SKVPSSASSARSLSSTSSHSKPWK).

The protein belongs to the CEP41 family.

Its subcellular location is the cytoplasm. It is found in the cytoskeleton. It localises to the microtubule organizing center. The protein resides in the centrosome. The protein localises to the cell projection. Its subcellular location is the cilium. It is found in the cilium basal body. Functionally, required during ciliogenesis for tubulin glutamylation in cilium. Probably acts by participating in the transport of tubulin polyglutamylases between the basal body and the cilium. The polypeptide is Centrosomal protein of 41 kDa B (cep41-b) (Xenopus laevis (African clawed frog)).